A 363-amino-acid chain; its full sequence is Chorismate synthase (363 aa).

Residue arginine 48 participates in NADP(+) binding. FMN contacts are provided by residues 125–127, 238–239, glycine 278, 293–297, and arginine 319; these read RSS, NA, and KPTAS.

It belongs to the chorismate synthase family. As to quaternary structure, homotetramer. FMNH2 serves as cofactor.

It catalyses the reaction 5-O-(1-carboxyvinyl)-3-phosphoshikimate = chorismate + phosphate. Its pathway is metabolic intermediate biosynthesis; chorismate biosynthesis; chorismate from D-erythrose 4-phosphate and phosphoenolpyruvate: step 7/7. Functionally, catalyzes the anti-1,4-elimination of the C-3 phosphate and the C-6 proR hydrogen from 5-enolpyruvylshikimate-3-phosphate (EPSP) to yield chorismate, which is the branch point compound that serves as the starting substrate for the three terminal pathways of aromatic amino acid biosynthesis. This reaction introduces a second double bond into the aromatic ring system. This Acinetobacter baylyi (strain ATCC 33305 / BD413 / ADP1) protein is Chorismate synthase.